A 397-amino-acid chain; its full sequence is MAKAKFERTKPHCNIGTIGHVDHGKTTLTAAITKTLHERLGTGEAVAFENIDKAPEERERGITISTAHVEYETEKRHYAHVDCPGHADYVKNMITGAAQMDAGILVVAATDGVMAQTREHILLARQVGVPYIVVFMNKCDMVDDPELLELVDMEIRELLNEYGFPGDDTPIIQGSALKALEDPNSEWGDKILELMHTIDEYVPDPERDTDKPFLMPVEDVFSITGRGTVATGRVERGVLHVNEEVEIVGIHEDIRKVVVTGIEMFRKLLDEAQPGDNIGALLRGVQRDEIQRGQVLCKPGSITPHHKFTAQVYVLTKDEGGRHTPFFNNYRPQFYFRTTDVTGVCELPAGTEMCMPGDNVEMTVELIHNVAMEQGLRFAIREGGRTVGSGAVATIIE.

The tr-type G domain maps to 10-206 (KPHCNIGTIG…TIDEYVPDPE (197 aa)). Positions 19–26 (GHVDHGKT) are G1. Position 19-26 (19-26 (GHVDHGKT)) interacts with GTP. Threonine 26 serves as a coordination point for Mg(2+). The interval 61–65 (GITIS) is G2. The G3 stretch occupies residues 82-85 (DCPG). Residues 82-86 (DCPGH) and 137-140 (NKCD) each bind GTP. A G4 region spans residues 137 to 140 (NKCD). A G5 region spans residues 175 to 177 (SAL).

This sequence belongs to the TRAFAC class translation factor GTPase superfamily. Classic translation factor GTPase family. EF-Tu/EF-1A subfamily. Monomer.

The protein resides in the cytoplasm. It catalyses the reaction GTP + H2O = GDP + phosphate + H(+). Its function is as follows. GTP hydrolase that promotes the GTP-dependent binding of aminoacyl-tRNA to the A-site of ribosomes during protein biosynthesis. This chain is Elongation factor Tu, found in Lachnospira eligens (strain ATCC 27750 / DSM 3376 / VPI C15-48 / C15-B4) (Eubacterium eligens).